Consider the following 105-residue polypeptide: MAQSQNIRIRLKAFDYRVLDTSTQEIVNTAKRTGASVRGPIPLPNKIEKFTVLRGPHVDKKSRDQFEIRTHKRLLDIVDPTPQTVDALMKLDLAAGVDVEIKLQS.

It belongs to the universal ribosomal protein uS10 family. In terms of assembly, part of the 30S ribosomal subunit.

Its function is as follows. Involved in the binding of tRNA to the ribosomes. The protein is Small ribosomal subunit protein uS10 of Roseobacter denitrificans (strain ATCC 33942 / OCh 114) (Erythrobacter sp. (strain OCh 114)).